The chain runs to 238 residues: tRNA (guanine-N(1)-)-methyltransferase (238 aa).

S-adenosyl-L-methionine-binding positions include G112 and 131–136; that span reads LGDFIL.

This sequence belongs to the RNA methyltransferase TrmD family. Homodimer.

It localises to the cytoplasm. It catalyses the reaction guanosine(37) in tRNA + S-adenosyl-L-methionine = N(1)-methylguanosine(37) in tRNA + S-adenosyl-L-homocysteine + H(+). In terms of biological role, specifically methylates guanosine-37 in various tRNAs. This Nostoc punctiforme (strain ATCC 29133 / PCC 73102) protein is tRNA (guanine-N(1)-)-methyltransferase.